Here is a 378-residue protein sequence, read N- to C-terminus: Lipid-A-disaccharide synthase (378 aa).

Belongs to the LpxB family.

It carries out the reaction a lipid X + a UDP-2-N,3-O-bis[(3R)-3-hydroxyacyl]-alpha-D-glucosamine = a lipid A disaccharide + UDP + H(+). It functions in the pathway bacterial outer membrane biogenesis; LPS lipid A biosynthesis. In terms of biological role, condensation of UDP-2,3-diacylglucosamine and 2,3-diacylglucosamine-1-phosphate to form lipid A disaccharide, a precursor of lipid A, a phosphorylated glycolipid that anchors the lipopolysaccharide to the outer membrane of the cell. This Pseudomonas paraeruginosa (strain DSM 24068 / PA7) (Pseudomonas aeruginosa (strain PA7)) protein is Lipid-A-disaccharide synthase.